The sequence spans 393 residues: Ninja-family protein 1 (393 aa).

Disordered stretches follow at residues 1–27 and 155–200; these read MEGF…PGQL and NDDW…KEMN. The segment covering 156-170 has biased composition (basic and acidic residues); that stretch reads DDWKKRKEAQSLKRL.

Belongs to the Ninja family.

It is found in the nucleus. This is Ninja-family protein 1 from Zea mays (Maize).